The sequence spans 620 residues: Chaperone protein HscA homolog (620 aa).

The protein belongs to the heat shock protein 70 family.

In terms of biological role, chaperone involved in the maturation of iron-sulfur cluster-containing proteins. Has a low intrinsic ATPase activity which is markedly stimulated by HscB. This chain is Chaperone protein HscA homolog, found in Neisseria meningitidis serogroup A / serotype 4A (strain DSM 15465 / Z2491).